A 628-amino-acid polypeptide reads, in one-letter code: EF-hand calcium-binding domain-containing protein 7 (628 aa).

The span at Met1–Pro22 shows a compositional bias: polar residues. Residues Met1–Thr24 form a disordered region. EF-hand domains are found at residues Thr102–Lys137 and Met138–Gln173. The interval Gln192–Ser231 is disordered. Phosphoserine is present on residues Ser200 and Ser212. A compositionally biased stretch (polar residues) spans Glu222–Ser231. Residues Glu402 to Glu437 enclose the EF-hand 3 domain. 4 residues coordinate Ca(2+): Asp415, Asp417, Asn419, and Glu426.

Component of the EvC complex composed of EFCAB7, IQCE, EVC2 and EVC; built from two subcomplexes, EVC2:EVC and EFCAB7:IQCE. Interacts (via EF-hand 1 and 2) with IQCE (via N-terminus); this interaction anchors the EVC-EVC2 complex in a signaling microdomain at the base of cilia and stimulates the Hedgehog (Hh) pathway. Interacts with EVC2 (via N-terminal end). Interacts with EVC.

The protein resides in the cell projection. Its subcellular location is the cilium membrane. Component of the EvC complex that positively regulates ciliary Hedgehog (Hh) signaling. Required for the localization of the EVC2:EVC subcomplex at the base of primary cilia. The sequence is that of EF-hand calcium-binding domain-containing protein 7 (Efcab7) from Mus musculus (Mouse).